Reading from the N-terminus, the 468-residue chain is ATP synthase subunit beta (468 aa).

155-162 serves as a coordination point for ATP; that stretch reads GGAGVGKT.

This sequence belongs to the ATPase alpha/beta chains family. F-type ATPases have 2 components, CF(1) - the catalytic core - and CF(0) - the membrane proton channel. CF(1) has five subunits: alpha(3), beta(3), gamma(1), delta(1), epsilon(1). CF(0) has three main subunits: a(1), b(2) and c(9-12). The alpha and beta chains form an alternating ring which encloses part of the gamma chain. CF(1) is attached to CF(0) by a central stalk formed by the gamma and epsilon chains, while a peripheral stalk is formed by the delta and b chains.

The protein resides in the cell inner membrane. The enzyme catalyses ATP + H2O + 4 H(+)(in) = ADP + phosphate + 5 H(+)(out). In terms of biological role, produces ATP from ADP in the presence of a proton gradient across the membrane. The catalytic sites are hosted primarily by the beta subunits. This Bdellovibrio bacteriovorus (strain ATCC 15356 / DSM 50701 / NCIMB 9529 / HD100) protein is ATP synthase subunit beta.